Reading from the N-terminus, the 292-residue chain is Tyrosine isonitrile desaturase (292 aa).

Fe cation-binding residues include His-110, Asp-112, and His-259.

It belongs to the TfdA dioxygenase family. It depends on Fe(2+) as a cofactor.

It carries out the reaction (2S)-3-(4-hydroxyphenyl)-2-isocyanopropanoate + 2-oxoglutarate + O2 = (2E)-3-(4-hydroxyphenyl)-2-isocyanoprop-2-enoate + succinate + CO2 + H2O. Its function is as follows. Catalyzes the 2-oxoglutarate-dependent oxidation of tyrosine isonitrile. The sequence is that of Tyrosine isonitrile desaturase from Erwinia amylovora (strain CFBP1430).